Consider the following 474-residue polypeptide: MVMEEGRSIEEGLLQLKNKNDDSECRITACVILSTFVAVCGSFSFGVATGYTSGAETGVMKDLDLSIAQFSAFGSFATLGAAIGALFCGNLAMVIGRRGTMWVSDFLCITGWLSIAFAKEVVLLNFGRIISGIGFGLTSYVVPVYIAEITPKHVRGTFTFSNQLLQNAGLAMIYFCGNFITWRTLALLGALPCFIQVIGLFFVPESPRWLAKVGSDKELENSLFRLRGRDADISREASEIQVMTKMVENDSKSSFSDLFQRKYRYTLVVGIGLMLIQQFSGSAAVISYASTIFRKAGFSVAIGTTMLGIFVIPKAMIGLILVDKWGRRPLLMTSAFGMSMTCMLLGVAFTLQKMQLLSELTPILSFICVMMYIATYAIGLGGLPWVIMSEIFPINIKVTAGSIVTLVSFSSSSIVTYAFNFLFEWSTQGTFFIFAGIGGAALLFIWLLVPETKGLSLEEIQVSLIHQPDERNQT.

12 helical membrane-spanning segments follow: residues 27–47 (ITACVILSTFVAVCGSFSFGV), 76–96 (FATLGAAIGALFCGNLAMVIG), 106–126 (FLCITGWLSIAFAKEVVLLNF), 129–149 (IISGIGFGLTSYVVPVYIAEI), 159–180 (TFSNQLLQNAGLAMIYFCGNFI), 184–204 (TLALLGALPCFIQVIGLFFVP), 266–286 (TLVVGIGLMLIQQFSGSAAVI), 302–322 (IGTTMLGIFVIPKAMIGLILV), 329–349 (PLLMTSAFGMSMTCMLLGVAF), 363–383 (ILSFICVMMYIATYAIGLGGL), 403–423 (IVTLVSFSSSSIVTYAFNFLF), and 429–449 (GTFFIFAGIGGAALLFIWLLV).

The protein belongs to the major facilitator superfamily. Sugar transporter (TC 2.A.1.1) family. In terms of tissue distribution, expressed in young seedlings.

The protein localises to the membrane. In terms of biological role, sugar transporter. In Arabidopsis thaliana (Mouse-ear cress), this protein is Sugar transporter ERD6-like 17.